The sequence spans 106 residues: Large ribosomal subunit protein bL21 (106 aa).

It belongs to the bacterial ribosomal protein bL21 family. In terms of assembly, part of the 50S ribosomal subunit. Contacts protein L20.

Functionally, this protein binds to 23S rRNA in the presence of protein L20. This Thermosipho africanus (strain TCF52B) protein is Large ribosomal subunit protein bL21.